Consider the following 455-residue polypeptide: tRNA modification GTPase MnmE (455 aa).

(6S)-5-formyl-5,6,7,8-tetrahydrofolate contacts are provided by R24, E81, and K120. In terms of domain architecture, TrmE-type G spans 216-378 (GMTVVIAGRP…LREHLKACMG (163 aa)). Residue N226 coordinates K(+). GTP contacts are provided by residues 226–231 (NAGKSS), 245–251 (TDIAGTT), 270–273 (DTAG), and 335–338 (NKAD). S230 is a Mg(2+) binding site. T245, I247, and T250 together coordinate K(+). T251 serves as a coordination point for Mg(2+). K455 provides a ligand contact to (6S)-5-formyl-5,6,7,8-tetrahydrofolate.

Belongs to the TRAFAC class TrmE-Era-EngA-EngB-Septin-like GTPase superfamily. TrmE GTPase family. As to quaternary structure, homodimer. Heterotetramer of two MnmE and two MnmG subunits. K(+) is required as a cofactor.

The protein resides in the cytoplasm. Its function is as follows. Exhibits a very high intrinsic GTPase hydrolysis rate. Involved in the addition of a carboxymethylaminomethyl (cmnm) group at the wobble position (U34) of certain tRNAs, forming tRNA-cmnm(5)s(2)U34. The chain is tRNA modification GTPase MnmE from Ectopseudomonas mendocina (strain ymp) (Pseudomonas mendocina).